The chain runs to 1209 residues: MMELPLCGRGLILSLIFLLLKLSAAEIPLSVQQVPTIVKQSYVQVAFPFDEYFQIECEAKGNPEPIFSWTKDDKPFDLSDPRIIAANNSGTFKIPNEGHISHFQGKYRCFASNRLGTAVSEEIEFIVPGVPKFPKEKIEPIDVEEGDSIVLPCNPPKGLPPLHIYWMNIELEHIEQDERVYMSQRGDLYFANVEENDSRNDYCCFAAFPKLRTIVQKMPMKLTVNSSNSIKQRKPKLLLPPAQMGSLSAKTVLKGDTLLLECFAEGLPTPHIQWSKPGSELPEGRATIEVHEKTLKIENISYQDRGNYRCTANNLLGKASHDFHVTVEEPPRWKKKPQSAVYSTGSSGILLCEAEGEPQPTIKWRLNGLPIEKHPFPGDFMFPREISFTNLLPNHTGVYQCEASNIHGTILANANIDVIDVIPLIKTKNEENYATVVGYSAFLHCEYFASPKATVVWEVADETHPLEGDRYHTHENGTLEIYRTTEEDAGSYSCWVDNAMGKAVITANLDIRNATKLRVSPKNPRIPKSHVLELYCESQCDSHLKHSLKLSWSKDGEAFEMNGTEDGRIVIDGAYLTISNITAEDQGVYSCSAQTSLDSTSEKTQVTVLGVPDPPGNLHLSERQNRSVRLSWEAGDDHNSKISEYIVEFEGNREEPGKWEELTRVQGEETDVVLSLAPYVRYQFRVTAVNEVGRSHASLPSDHHETPPAAPDKNPQNIRVQASQPKEMIIKWEPLKSMEQNGPGLEYKVSWKPQGAPEEWEEEIVTNHTLRVMTPTVYAPYDVKVQAINQLGSSPDPQPVTLYSGEDYPSTAPVIQRVDVMNSTLVKVTWSSIPKETVHGLLRGYQINWWKTKSLLDGRTHPKEVNILRFSGQRNSGMVPSLDPFSEFHLTVLAYNSKGAGPESEPYIFQTPEGVPEQPSFLKVIKVDKDTATLSWGLPKKLNGNLTGYLLQYQIINDTYELGELNEINVTTPSKSSWHLSNLNSTTKYKFYLRACTSRGCGKPISEEGATLGEGSKGIRKITEGVNVTQKIHPVEVLVPGAEHIVHLMTKNWGDNDSIFQDVIETRGREYAGLYDDISTQGWFIGLMCAIALLTLILLTICFVKRNRGGKYSVKEKEDLHPDPEVQSAKDETFGEYSDSDEKPLKGSLRSLNRNMQPTESADSLVEYGEGDQSIFNEDGSFIGAYTGAKEKGSVESNGSSTATFPLRA.

Positions 1–25 (MMELPLCGRGLILSLIFLLLKLSAA) are cleaved as a signal peptide. The Extracellular portion of the chain corresponds to 26–1083 (EIPLSVQQVP…LYDDISTQGW (1058 aa)). Ig-like C2-type domains follow at residues 35–124 (PTIV…EEIE) and 128–223 (PGVP…MKLT). Disulfide bonds link cysteine 57–cysteine 109 and cysteine 153–cysteine 204. N-linked (GlcNAc...) asparagine glycosylation occurs at asparagine 87. Asparagine 225 and asparagine 299 each carry an N-linked (GlcNAc...) asparagine glycan. Ig-like C2-type domains lie at 235-328 (PKLL…VTVE), 331-417 (PRWK…ANID), 423-510 (PLIK…ANLD), and 515-607 (TKLR…TQVT). 4 cysteine pairs are disulfide-bonded: cysteine 262-cysteine 310, cysteine 352-cysteine 401, cysteine 445-cysteine 494, and cysteine 536-cysteine 591. Asparagine 476 carries N-linked (GlcNAc...) asparagine glycosylation. The DGEA signature appears at 555 to 558 (DGEA). N-linked (GlcNAc...) asparagine glycosylation is found at asparagine 562 and asparagine 580. 4 Fibronectin type-III domains span residues 614–709 (PPGN…TPPA), 714–807 (NPQN…SGED), 812–914 (APVI…TPEG), and 918–1015 (QPSF…LGEG). The tract at residues 696–717 (HASLPSDHHETPPAAPDKNPQN) is disordered. N-linked (GlcNAc...) asparagine glycosylation is found at asparagine 767, asparagine 822, asparagine 945, and asparagine 1027. A helical membrane pass occupies residues 1084-1104 (FIGLMCAIALLTLILLTICFV). The Cytoplasmic portion of the chain corresponds to 1105 to 1209 (KRNRGGKYSV…SSTATFPLRA (105 aa)). The segment covering 1115–1133 (KEKEDLHPDPEVQSAKDET) has biased composition (basic and acidic residues). The tract at residues 1115 to 1170 (KEKEDLHPDPEVQSAKDETFGEYSDSDEKPLKGSLRSLNRNMQPTESADSLVEYGE) is disordered. A phosphoserine mark is found at serine 1148, serine 1161, and serine 1181. Residues 1150 to 1162 (RSLNRNMQPTESA) are compositionally biased toward polar residues. An FIG[AQ]Y motif is present at residues 1182-1186 (FIGAY).

The protein belongs to the immunoglobulin superfamily. L1/neurofascin/NgCAM family. May interact with L1CAM. May interact with ITGB1/ITGA1 heterodimer and ITGB1/ITGA2 heterodimer as well as with ANK3. Cleavage by metalloprotease ADAM8 in the extracellular part generates 2 soluble forms (125 kDa and 165 kDa) in vitro and is inhibited by metalloprotease inhibitors. In brain extracts, these two soluble forms are also present and are dramatically reduced in mice lacking ADAM8. Cleaved by BACE1. In terms of processing, N-glycosylated. Contains N-linked oligosaccharides with a sulfated carbohydrate structure type HNK-1 (SO4-3-GlcUABeta1,3GalBeta1,4GlcNAc). Post-translationally, O-glycosylated. In terms of tissue distribution, expressed in the brain, in the cerebellum and in the spinal cord. Detected in the retina and the optic nerve. Expressed in neurons and glial cells in the central nervous system and by Schwann cells in the peripheral nervous system.

It is found in the cell membrane. The protein localises to the secreted. It localises to the extracellular space. The protein resides in the extracellular matrix. In terms of biological role, extracellular matrix and cell adhesion protein that plays a role in nervous system development and in synaptic plasticity. Both soluble and membranous forms promote neurite outgrowth of cerebellar and hippocampal neurons and suppress neuronal cell death. Plays a role in neuronal positioning of pyramidal neurons as well as in regulation of both the number of interneurons and the efficacy of GABAergic synapses. May play a role in regulating cell migration in nerve regeneration and cortical development. Potentiates integrin-dependent cell migration towards extracellular matrix proteins. Recruits ANK3 to the plasma membrane. This is Neural cell adhesion molecule L1-like protein (Chl1) from Mus musculus (Mouse).